Consider the following 270-residue polypeptide: Non-structural maintenance of chromosomes element 1 homolog (270 aa).

The RING-type; atypical zinc-finger motif lies at 185–226; it reads CNVCRKVAIQSQLCENCGIPLHLQCAGKYFHGKANPTCPNCN. Residues 236 to 270 are disordered; it reads LNQVSSQGPSHSQTETVRGRNQRSKNTSTASRTSR. Polar residues-rich tracts occupy residues 237-251 and 259-270; these read NQVS…QTET and SKNTSTASRTSR.

Belongs to the NSE1 family. Component of the SMC5-SMC6 complex.

Its subcellular location is the nucleus. It is found in the chromosome. The protein localises to the telomere. The enzyme catalyses S-ubiquitinyl-[E2 ubiquitin-conjugating enzyme]-L-cysteine + [acceptor protein]-L-lysine = [E2 ubiquitin-conjugating enzyme]-L-cysteine + N(6)-ubiquitinyl-[acceptor protein]-L-lysine.. Its function is as follows. RING-type zinc finger-containing E3 ubiquitin ligase that assembles with melanoma antigen protein (MAGE) to catalyze the direct transfer of ubiquitin from E2 ubiquitin-conjugating enzyme to a specific substrate. Within MAGE-RING ubiquitin ligase complex, MAGE stimulates and specifies ubiquitin ligase activity likely through recruitment and/or stabilization of the E2 ubiquitin-conjugating enzyme at the E3:substrate complex. Involved in maintenance of genome integrity, DNA damage response and DNA repair. In Xenopus laevis (African clawed frog), this protein is Non-structural maintenance of chromosomes element 1 homolog (nsmce1).